A 590-amino-acid chain; its full sequence is Transcription factor bHLH13 (590 aa).

Disordered regions lie at residues 274–296 (LQHH…HRQF) and 385–439 (AASS…EAER). A compositionally biased stretch (low complexity) spans 281–293 (QQQQQQPPQQQQH). Over residues 416–425 (RPRKRGRRPA) the composition is skewed to basic residues. One can recognise a bHLH domain in the interval 429-478 (AEALNHVEAERQRREKLNQRFYALRSVVPNISKMDKASLLGDAVSYINEL).

Homodimer.

The protein resides in the nucleus. The protein is Transcription factor bHLH13 (BHLH13) of Arabidopsis thaliana (Mouse-ear cress).